We begin with the raw amino-acid sequence, 374 residues long: N-acetyldiaminopimelate deacetylase (374 aa).

The active site involves Asp-69. The active-site Proton acceptor is Glu-128.

It belongs to the peptidase M20A family. N-acetyldiaminopimelate deacetylase subfamily.

The catalysed reaction is N-acetyl-(2S,6S)-2,6-diaminopimelate + H2O = (2S,6S)-2,6-diaminopimelate + acetate. Its pathway is amino-acid biosynthesis; L-lysine biosynthesis via DAP pathway; LL-2,6-diaminopimelate from (S)-tetrahydrodipicolinate (acetylase route): step 3/3. Catalyzes the conversion of N-acetyl-diaminopimelate to diaminopimelate and acetate. The polypeptide is N-acetyldiaminopimelate deacetylase (Bacillus velezensis (strain DSM 23117 / BGSC 10A6 / LMG 26770 / FZB42) (Bacillus amyloliquefaciens subsp. plantarum)).